A 743-amino-acid chain; its full sequence is MSTDNSKIIYTITDEAPALATYSLLPIIQAYTASSGINVETRDISLAGRILANFPKYLTKEQRIDDALAELGELAQTPEANIIKLPNISASIPQLEAVIKELQAKGYDLPHYPAEPQNEAEESIKLTYAKILGSAVNPVLREGNSDRRAPASVKQYARNNPHSMGAWSKESKSHVAHMASGDFYGSEKSVTIDGATSVNIEFVAKNGDVTLLKSKLPLLDKEIIDASVMSKSALVEFFETEINKAKEEDVLLSLHLKATMMKVSDPVMFGHAVRVFYKDVFAKHAATFEQLGVDADNGIGDVYAKIARLPAAQKEEIEADLQAVYATRPEMAMVDSDKGITNLHVPSDVIIDASMPAALRASGMMWGPDGKQKDTKFMIPDRNYAGVFSAVVDFCRENGAFNPATMGTVPNVGLMAQKAEEYGSHDKTFTMKAAGTVRVVNSQGERLIEQEVAQGDIYRMCQVKDAPIQDWVKLAVTRARATGTPTVFWLDENRGHDEQMIKKVNTYLADHDTTGLDIQILEPVKACEFTLARVAKGEDAISVTGNVLRDYLTDLFPILELGTSAKMLSIVPLMNGGGLFETGAGGSAPKHVQQFEKENHLRWDSLGEFLALAASLEHVAVTTGNARAQILADTLDAATGKFLDTNKSPSRKVGELDNRGSHFYLAMYWAQALAAQTTDTELQASFSSVAQALTKQEEKIVAELNAAQGPAIDLNGYYFADTKLAEKAMRPSETFNTILSALL.

NADP(+) contacts are provided by Asn-87 and Ser-89. Residues Ser-134, Asn-137, Arg-141, Arg-147, and Lys-257 each contribute to the D-threo-isocitrate site. Asn-137 contributes to the NADP(+) binding site. Asp-352 provides a ligand contact to Mg(2+). Positions 422 and 549 each coordinate D-threo-isocitrate. Mg(2+) is bound by residues Asp-550 and Asp-554. NADP(+) is bound by residues Ser-587, His-591, Arg-602, Asp-604, and Arg-651.

This sequence belongs to the monomeric-type IDH family. As to quaternary structure, monomer. It depends on Mg(2+) as a cofactor. Requires Mn(2+) as cofactor.

The catalysed reaction is D-threo-isocitrate + NADP(+) = 2-oxoglutarate + CO2 + NADPH. In terms of biological role, catalyzes the oxidative decarboxylation of isocitrate to 2-oxoglutarate and carbon dioxide with the concomitant reduction of NADP(+). The sequence is that of Isocitrate dehydrogenase [NADP] 2 (icd2) from Colwellia maris.